The following is a 216-amino-acid chain: MOB kinase activator 3C (216 aa).

Zn(2+) contacts are provided by cysteine 82, cysteine 87, histidine 164, and histidine 169.

This sequence belongs to the MOB1/phocein family.

May regulate the activity of kinases. The protein is MOB kinase activator 3C (Mob3c) of Mus musculus (Mouse).